Consider the following 543-residue polypeptide: Chaperonin GroEL (543 aa).

ATP-binding positions include 29–32, 86–90, Gly-413, 477–479, and Asp-493; these read TLGP, DGTTT, and DAL.

This sequence belongs to the chaperonin (HSP60) family. Forms a cylinder of 14 subunits composed of two heptameric rings stacked back-to-back. Interacts with the co-chaperonin GroES.

The protein localises to the cytoplasm. The catalysed reaction is ATP + H2O + a folded polypeptide = ADP + phosphate + an unfolded polypeptide.. In terms of biological role, together with its co-chaperonin GroES, plays an essential role in assisting protein folding. The GroEL-GroES system forms a nano-cage that allows encapsulation of the non-native substrate proteins and provides a physical environment optimized to promote and accelerate protein folding. The chain is Chaperonin GroEL from Clostridium novyi (strain NT).